A 317-amino-acid chain; its full sequence is Beta-ketoacyl-[acyl-carrier-protein] synthase III (317 aa).

Active-site residues include C112 and H244. The segment at Q245–R249 is ACP-binding. N274 is an active-site residue.

It belongs to the thiolase-like superfamily. FabH family. In terms of assembly, homodimer.

The protein resides in the cytoplasm. The catalysed reaction is malonyl-[ACP] + acetyl-CoA + H(+) = 3-oxobutanoyl-[ACP] + CO2 + CoA. It participates in lipid metabolism; fatty acid biosynthesis. Functionally, catalyzes the condensation reaction of fatty acid synthesis by the addition to an acyl acceptor of two carbons from malonyl-ACP. Catalyzes the first condensation reaction which initiates fatty acid synthesis and may therefore play a role in governing the total rate of fatty acid production. Possesses both acetoacetyl-ACP synthase and acetyl transacylase activities. Its substrate specificity determines the biosynthesis of branched-chain and/or straight-chain of fatty acids. The polypeptide is Beta-ketoacyl-[acyl-carrier-protein] synthase III (Rickettsia typhi (strain ATCC VR-144 / Wilmington)).